The chain runs to 253 residues: tRNA pseudouridine synthase A (253 aa).

Asp-53 serves as the catalytic Nucleophile. Substrate is bound at residue Tyr-112.

The protein belongs to the tRNA pseudouridine synthase TruA family. Homodimer.

The catalysed reaction is uridine(38/39/40) in tRNA = pseudouridine(38/39/40) in tRNA. Functionally, formation of pseudouridine at positions 38, 39 and 40 in the anticodon stem and loop of transfer RNAs. This is tRNA pseudouridine synthase A from Lactococcus lactis subsp. cremoris (strain SK11).